The chain runs to 327 residues: NADPH-dependent aldose reductase GRE3 (327 aa).

Tyr-49 acts as the Proton donor in catalysis. A substrate-binding site is contributed by His-111. Ser-219–Asn-286 contacts NADP(+).

The protein belongs to the aldo/keto reductase family. As to quaternary structure, monomer.

It is found in the cytoplasm. The protein resides in the nucleus. The enzyme catalyses an alditol + NAD(+) = an aldose + NADH + H(+). It catalyses the reaction an alditol + NADP(+) = an aldose + NADPH + H(+). Aldose reductase with a broad substrate specificity. Reduces the cytotoxic compound methylglyoxal (MG) to acetol and (R)-lactaldehyde under stress conditions. MG is synthesized via a bypath of glycolysis from dihydroxyacetone phosphate and is believed to play a role in cell cycle regulation and stress adaptation. In pentose-fermenting yeasts, aldose reductase catalyzes the reduction of xylose into xylitol. The purified enzyme catalyzes this reaction, but the inability of S.cerevisiae to grow on xylose as sole carbon source indicates that the physiological function is more likely methylglyoxal reduction. This Saccharomyces cerevisiae (strain ATCC 204508 / S288c) (Baker's yeast) protein is NADPH-dependent aldose reductase GRE3.